Consider the following 318-residue polypeptide: N-succinylornithine carbamoyltransferase (318 aa).

Residues 47–50 (SLRT), Trp75, and Arg110 contribute to the carbamoyl phosphate site. Glu142 lines the N(2)-succinyl-L-ornithine pocket. 147–150 (HPLQ) contacts carbamoyl phosphate. N(2)-succinyl-L-ornithine is bound by residues His176 and Lys236. 274–275 (CL) provides a ligand contact to carbamoyl phosphate. Arg278 lines the N(2)-succinyl-L-ornithine pocket. Arg302 is a carbamoyl phosphate binding site.

It belongs to the aspartate/ornithine carbamoyltransferase superfamily. SOTCase family. As to quaternary structure, homotrimer.

The enzyme catalyses N(2)-succinyl-L-ornithine + carbamoyl phosphate = N(2)-succinyl-L-citrulline + phosphate + H(+). The protein operates within amino-acid biosynthesis; L-arginine biosynthesis. Catalyzes the transfer of the carbamoyl group from carbamoyl phosphate to the delta-amino group of N(2)-succinyl-L-ornithine to produce N(2)-succinyl-L-citrulline. Is essential for arginine biosynthesis. Has no activity with either L-ornithine or L-aspartate as substrate. Also has no detectable AOTCase activity, being unable to convert N(2)-acetyl-L-ornithine to N(2)-acetyl-L-citrulline. The sequence is that of N-succinylornithine carbamoyltransferase from Bacteroides fragilis (strain 638R).